A 160-amino-acid chain; its full sequence is Protein CrtK (160 aa).

The next 5 membrane-spanning stretches (helical) occupy residues 3-23 (LTLF…GAIF), 37-57 (WVPP…LMSI), 76-96 (LAFW…FFGL), 101-121 (GGML…VLFW), and 129-149 (LMFV…FSVW).

It belongs to the TspO/BZRP family.

Its subcellular location is the cell inner membrane. Its pathway is carotenoid biosynthesis; spheroidene biosynthesis. The protein is Protein CrtK (crtK) of Rhodobacter capsulatus (strain ATCC BAA-309 / NBRC 16581 / SB1003).